The primary structure comprises 363 residues: F-box protein At3g44326 (363 aa).

A disordered region spans residues Met1–Ala23. The 40-residue stretch at Asp27 to Cys66 folds into the F-box domain.

The polypeptide is F-box protein At3g44326 (Arabidopsis thaliana (Mouse-ear cress)).